We begin with the raw amino-acid sequence, 115 residues long: UPF0102 protein NGO_1987 (115 aa).

The protein belongs to the UPF0102 family.

This Neisseria gonorrhoeae (strain ATCC 700825 / FA 1090) protein is UPF0102 protein NGO_1987.